Reading from the N-terminus, the 86-residue chain is Toxin Tpa5 (86 aa).

Residues 1-20 (MSIFPIALALLLIGLEEGEA) form the signal peptide. In terms of domain architecture, LCN-type CS-alpha/beta spans 22-85 (RDGYPISKNN…WGDPGTPPCM (64 aa)). 4 disulfide bridges follow: Cys-33–Cys-84, Cys-37–Cys-58, Cys-43–Cys-64, and Cys-47–Cys-66.

This sequence belongs to the long (4 C-C) scorpion toxin superfamily. Sodium channel inhibitor family. Beta subfamily. As to expression, expressed by the venom gland.

It localises to the secreted. Functionally, beta toxins bind voltage-independently at site-4 of sodium channels (Nav) and shift the voltage of activation toward more negative potentials thereby affecting sodium channel activation and promoting spontaneous and repetitive firing. The protein is Toxin Tpa5 of Tityus pachyurus (Colombian scorpion).